Here is a 316-residue protein sequence, read N- to C-terminus: Pantothenate kinase (316 aa).

95–102 (GSVSVGKS) lines the ATP pocket.

This sequence belongs to the prokaryotic pantothenate kinase family.

Its subcellular location is the cytoplasm. It catalyses the reaction (R)-pantothenate + ATP = (R)-4'-phosphopantothenate + ADP + H(+). It functions in the pathway cofactor biosynthesis; coenzyme A biosynthesis; CoA from (R)-pantothenate: step 1/5. The sequence is that of Pantothenate kinase from Actinobacillus pleuropneumoniae serotype 7 (strain AP76).